Here is a 348-residue protein sequence, read N- to C-terminus: Histidinol-phosphate aminotransferase (348 aa).

Lys210 carries the post-translational modification N6-(pyridoxal phosphate)lysine.

The protein belongs to the class-II pyridoxal-phosphate-dependent aminotransferase family. Histidinol-phosphate aminotransferase subfamily. Homodimer. Pyridoxal 5'-phosphate serves as cofactor.

It carries out the reaction L-histidinol phosphate + 2-oxoglutarate = 3-(imidazol-4-yl)-2-oxopropyl phosphate + L-glutamate. It functions in the pathway amino-acid biosynthesis; L-histidine biosynthesis; L-histidine from 5-phospho-alpha-D-ribose 1-diphosphate: step 7/9. This chain is Histidinol-phosphate aminotransferase, found in Pseudomonas putida (strain ATCC 47054 / DSM 6125 / CFBP 8728 / NCIMB 11950 / KT2440).